A 517-amino-acid polypeptide reads, in one-letter code: MARAWGLLLAIGVVLPTWLSSTKVSSLIERISDPKDLKKLLRTRNNVLVLYSESEVAAESHLKLLSTVAQAVKGQGTVCWVDCGDAESRKLCKKMKVDLSPKDKKIELFHYQDGAFHMQYDRAVTLKSIVAFLKDPKGPPLWEEDPGAKDVVHIDSEKDFRRLLKREEKPLLMMFYAPWCSMCKRIMPHFQKAATQVRGHIVLAGMNVYPSEFENIKEEYNVRGYPTICYFEKGRFLFPYENYGSTAEDIVEWLKNPLPPQPQVPETPWADEGGSVYHLTDEDFDQFVKEHSSVLVMFHAPWCGHCKKMKPEFESAAEVLHGDAESSGVLAAVDATVNEALAGRFHISAFPTLKYFKNGEQQAVPALRTKKKFIEWMQNPEAPPPPEPTWEEQQTSVLHLVGDNFRDTLKKKKHTLVMFYAPWCPHCKKVIPHFTATADAFKEDRKIACAAVDCVKDKNQDLCQQEAVKAYPTFHYYHYGKLVEKYESDRTELGFTSFIRTLREGDLKRLEKRREEL.

A signal peptide spans Met1–Ser21. 4 disulfides stabilise this stretch: Cys83/Cys92, Cys180/Cys183, Cys303/Cys306, and Cys424/Cys427. 3 consecutive Thioredoxin domains span residues Phe132 to Pro259, Pro268 to Ala382, and Trp376 to Glu504. Positions Arg514–Leu517 match the Prevents secretion from ER motif.

It belongs to the protein disulfide isomerase family. Interacts with CALR (via P-domain).

Its subcellular location is the endoplasmic reticulum lumen. It carries out the reaction Catalyzes the rearrangement of -S-S- bonds in proteins.. The chain is Protein disulfide-isomerase A5 (Pdia5) from Mus musculus (Mouse).